Reading from the N-terminus, the 227-residue chain is tRNA (guanine-N(7)-)-methyltransferase (227 aa).

Residues Glu58, Glu83, Asp110, and Asp132 each coordinate S-adenosyl-L-methionine. The active site involves Asp132. Substrate contacts are provided by residues Lys136, Asp168, and 205 to 208 (TRFE).

It belongs to the class I-like SAM-binding methyltransferase superfamily. TrmB family.

The catalysed reaction is guanosine(46) in tRNA + S-adenosyl-L-methionine = N(7)-methylguanosine(46) in tRNA + S-adenosyl-L-homocysteine. Its pathway is tRNA modification; N(7)-methylguanine-tRNA biosynthesis. Its function is as follows. Catalyzes the formation of N(7)-methylguanine at position 46 (m7G46) in tRNA. This Acidithiobacillus ferrooxidans (strain ATCC 23270 / DSM 14882 / CIP 104768 / NCIMB 8455) (Ferrobacillus ferrooxidans (strain ATCC 23270)) protein is tRNA (guanine-N(7)-)-methyltransferase.